A 210-amino-acid polypeptide reads, in one-letter code: Pyridoxine/pyridoxamine 5'-phosphate oxidase (210 aa).

Residues 7–10 (RQSY) and Lys-65 contribute to the substrate site. FMN contacts are provided by residues 60-65 (RIVLIK), 75-76 (FT), Arg-81, Lys-82, and Gln-104. Substrate-binding residues include Tyr-122, Arg-126, and Ser-130. FMN is bound by residues 139–140 (QS) and Trp-182. Position 188-190 (188-190 (RLH)) interacts with substrate. FMN is bound at residue Arg-192.

The protein belongs to the pyridoxamine 5'-phosphate oxidase family. As to quaternary structure, homodimer. The cofactor is FMN.

It carries out the reaction pyridoxamine 5'-phosphate + O2 + H2O = pyridoxal 5'-phosphate + H2O2 + NH4(+). The enzyme catalyses pyridoxine 5'-phosphate + O2 = pyridoxal 5'-phosphate + H2O2. It participates in cofactor metabolism; pyridoxal 5'-phosphate salvage; pyridoxal 5'-phosphate from pyridoxamine 5'-phosphate: step 1/1. Its pathway is cofactor metabolism; pyridoxal 5'-phosphate salvage; pyridoxal 5'-phosphate from pyridoxine 5'-phosphate: step 1/1. In terms of biological role, catalyzes the oxidation of either pyridoxine 5'-phosphate (PNP) or pyridoxamine 5'-phosphate (PMP) into pyridoxal 5'-phosphate (PLP). The sequence is that of Pyridoxine/pyridoxamine 5'-phosphate oxidase from Bordetella avium (strain 197N).